Consider the following 892-residue polypeptide: Alanine--tRNA ligase (892 aa).

Zn(2+) is bound by residues histidine 565, histidine 569, cysteine 678, and histidine 682. The segment at 857-876 (GGKGGGGRPDMAQAGGPDGA) is disordered.

This sequence belongs to the class-II aminoacyl-tRNA synthetase family. It depends on Zn(2+) as a cofactor.

Its subcellular location is the cytoplasm. It carries out the reaction tRNA(Ala) + L-alanine + ATP = L-alanyl-tRNA(Ala) + AMP + diphosphate. Functionally, catalyzes the attachment of alanine to tRNA(Ala) in a two-step reaction: alanine is first activated by ATP to form Ala-AMP and then transferred to the acceptor end of tRNA(Ala). Also edits incorrectly charged Ser-tRNA(Ala) and Gly-tRNA(Ala) via its editing domain. This is Alanine--tRNA ligase from Bradyrhizobium diazoefficiens (strain JCM 10833 / BCRC 13528 / IAM 13628 / NBRC 14792 / USDA 110).